A 20-amino-acid polypeptide reads, in one-letter code: Malate dehydrogenase (20 aa).

11–17 (GAAGQIG) provides a ligand contact to NAD(+).

Belongs to the LDH/MDH superfamily. MDH type 2 family.

The catalysed reaction is (S)-malate + NAD(+) = oxaloacetate + NADH + H(+). Its function is as follows. Catalyzes the reversible oxidation of malate to oxaloacetate. The polypeptide is Malate dehydrogenase (mdh) (Kibdelosporangium aridum).